A 179-amino-acid polypeptide reads, in one-letter code: Putative mediator of RNA polymerase II transcription subunit 28 (179 aa).

A coiled-coil region spans residues 81–119; sequence SAEKNKIQLKQEIYKVKKEIENKDRLIERYKNKVKEWKY.

This sequence belongs to the Mediator complex subunit 28 family. As to quaternary structure, component of the Mediator complex.

Its subcellular location is the nucleus. Functionally, component of the Mediator complex, a coactivator involved in the regulated transcription of nearly all RNA polymerase II-dependent genes. Mediator functions as a bridge to convey information from gene-specific regulatory proteins to the basal RNA polymerase II transcription machinery. Mediator is recruited to promoters by direct interactions with regulatory proteins and serves as a scaffold for the assembly of a functional preinitiation complex with RNA polymerase II and the general transcription factors. The sequence is that of Putative mediator of RNA polymerase II transcription subunit 28 (med28) from Dictyostelium discoideum (Social amoeba).